A 405-amino-acid polypeptide reads, in one-letter code: L-rhamnonate dehydratase (405 aa).

Positions 33 and 59 each coordinate substrate. Residues Asp226, Glu252, and Glu280 each coordinate Mg(2+). Catalysis depends on His329, which acts as the Proton acceptor. Glu349 contributes to the substrate binding site.

This sequence belongs to the mandelate racemase/muconate lactonizing enzyme family. RhamD subfamily. In terms of assembly, homooctamer; tetramer of dimers. The cofactor is Mg(2+).

The catalysed reaction is L-rhamnonate = 2-dehydro-3-deoxy-L-rhamnonate + H2O. Catalyzes the dehydration of L-rhamnonate to 2-keto-3-deoxy-L-rhamnonate (KDR). The sequence is that of L-rhamnonate dehydratase from Escherichia coli O9:H4 (strain HS).